The primary structure comprises 160 residues: Transcription elongation factor GreA (160 aa).

This sequence belongs to the GreA/GreB family.

Functionally, necessary for efficient RNA polymerase transcription elongation past template-encoded arresting sites. The arresting sites in DNA have the property of trapping a certain fraction of elongating RNA polymerases that pass through, resulting in locked ternary complexes. Cleavage of the nascent transcript by cleavage factors such as GreA or GreB allows the resumption of elongation from the new 3'terminus. GreA releases sequences of 2 to 3 nucleotides. This Leuconostoc citreum (strain KM20) protein is Transcription elongation factor GreA.